The primary structure comprises 499 residues: Glucosylglycerol-phosphate synthase (499 aa).

The protein belongs to the glycosyltransferase 20 family. Interacts with GGP-P. Post-translationally, seems to be degraded, at least in vitro, by FtsH2. In an ftsH2 disruption strain inactive GGPS accumulates.

The protein resides in the cytoplasm. The catalysed reaction is ADP-alpha-D-glucose + sn-glycerol 3-phosphate = 2-O-(alpha-D-glucopyranosyl)-sn-glycerol 3-phosphate + ADP + H(+). It functions in the pathway glycan metabolism; glucosylglycerol biosynthesis. Involved in salt tolerance by producing GG-phosphate from ADP-glucose and glycerol-3-phosphate (G3P), an intermediate in the synthesis of the osmolyte glucosylglycerol (GG). The protein is Glucosylglycerol-phosphate synthase (ggpS) of Synechocystis sp. (strain ATCC 27184 / PCC 6803 / Kazusa).